A 703-amino-acid chain; its full sequence is Polyribonucleotide nucleotidyltransferase (703 aa).

Aspartate 484 and aspartate 490 together coordinate Mg(2+). In terms of domain architecture, KH spans 551-610 (PTVTTLRVLPEKISVIIGPAGKNIKKIIEETGVKIDLDPTGLVKIYATSKIAAEKAIDMI). Residues 620–688 (GEVYLGKVTR…DQGRIKVSLK (69 aa)) enclose the S1 motif domain.

It belongs to the polyribonucleotide nucleotidyltransferase family. Requires Mg(2+) as cofactor.

Its subcellular location is the cytoplasm. The enzyme catalyses RNA(n+1) + phosphate = RNA(n) + a ribonucleoside 5'-diphosphate. In terms of biological role, involved in mRNA degradation. Catalyzes the phosphorolysis of single-stranded polyribonucleotides processively in the 3'- to 5'-direction. This Sulfurihydrogenibium sp. (strain YO3AOP1) protein is Polyribonucleotide nucleotidyltransferase.